Reading from the N-terminus, the 188-residue chain is Large ribosomal subunit protein uL5 (188 aa).

Belongs to the universal ribosomal protein uL5 family. Part of the 50S ribosomal subunit; contacts the 5S rRNA and probably tRNA. Forms a bridge to the 30S subunit in the 70S ribosome.

This is one of the proteins that bind and probably mediate the attachment of the 5S RNA into the large ribosomal subunit, where it forms part of the central protuberance. In the 70S ribosome it contacts protein S13 of the 30S subunit (bridge B1b), connecting the 2 subunits; this bridge is implicated in subunit movement. May contact the P site tRNA; the 5S rRNA and some of its associated proteins might help stabilize positioning of ribosome-bound tRNAs. This chain is Large ribosomal subunit protein uL5, found in Pyrococcus abyssi (strain GE5 / Orsay).